The following is a 433-amino-acid chain: Probable M18 family aminopeptidase 2 (433 aa).

Histidine 84, histidine 161, and histidine 409 together coordinate Zn(2+).

The protein belongs to the peptidase M18 family. Zn(2+) is required as a cofactor.

In Clostridium novyi (strain NT), this protein is Probable M18 family aminopeptidase 2.